The sequence spans 280 residues: Mastin (280 aa).

An N-terminal signal peptide occupies residues 1–15 (MLWLLVLTAPWLGGS). The propeptide occupies 16–30 (VPISPDPGLRHEQVG). Residues 31–275 (IVGGCKVPAR…YVSWIHQHIP (245 aa)) form the Peptidase S1 domain. Cys62 and Cys78 are disulfide-bonded. His77 acts as the Charge relay system in catalysis. 2 N-linked (GlcNAc...) asparagine glycosylation sites follow: Asn106 and Asn117. Catalysis depends on Asp127, which acts as the Charge relay system. 3 disulfide bridges follow: Cys161/Cys234, Cys194/Cys215, and Cys224/Cys252. Residue Ser228 is the Charge relay system of the active site.

It belongs to the peptidase S1 family. As to quaternary structure, oligomer; disulfide-linked. In terms of processing, N-glycosylated. In terms of tissue distribution, mononuclear cells within skin, intestine, trachea and lung parenchyma, and polymorphonuclear leukocytes within capillaries and blood.

The protein resides in the cytoplasm. Its activity is regulated as follows. Inhibited by leupeptin and bis(5-amidino-2-benzimidazolyl)methane (BABIM). In terms of biological role, trypsin-like serine protease. Has a preference for extended substrates with basic residues at the P1 position; Arg is preferred over Lys. Active towards calcitonin gene-related peptide and gelatin. Not active towards substance P, vasoactive intestinal peptide, type I collagen or azocasein. This is Mastin from Canis lupus familiaris (Dog).